A 216-amino-acid chain; its full sequence is SPbeta prophage-derived uncharacterized protein YomX (216 aa).

This Bacillus subtilis (strain 168) protein is SPbeta prophage-derived uncharacterized protein YomX (yomX).